The primary structure comprises 337 residues: Heme A synthase (337 aa).

5 helical membrane passes run 6 to 26 (ITKWLCISCIMVIATIVIGGI), 87 to 107 (FIHRLLGRITALIYIVPLIYF), 119 to 139 (LPYIIALLLFCIQGFIGWYMV), 154 to 174 (LAFHLIIAVIIYHILFYQLIK), and 192 to 212 (LIFSGIAITVVYVQIFLGALV). H256 serves as a coordination point for heme. 3 helical membrane passes run 258–278 (LVGYSVFLVVVVLIICLLKIE), 285–305 (IAYFLMIVLFMQVSTGIITLL), and 308–328 (VPIIIASIHQLFAIILLSIII). H316 contacts heme.

It belongs to the COX15/CtaA family. Type 2 subfamily. As to quaternary structure, interacts with CtaB. It depends on heme b as a cofactor.

It is found in the cell membrane. The catalysed reaction is Fe(II)-heme o + 2 A + H2O = Fe(II)-heme a + 2 AH2. It functions in the pathway porphyrin-containing compound metabolism; heme A biosynthesis; heme A from heme O: step 1/1. Catalyzes the conversion of heme O to heme A by two successive hydroxylations of the methyl group at C8. The first hydroxylation forms heme I, the second hydroxylation results in an unstable dihydroxymethyl group, which spontaneously dehydrates, resulting in the formyl group of heme A. This is Heme A synthase from Rickettsia africae (strain ESF-5).